Consider the following 445-residue polypeptide: Trigger factor (445 aa).

One can recognise a PPIase FKBP-type domain in the interval 162-247 (GDQVTIDAIG…IKAVHTAEPT (86 aa)).

The protein belongs to the FKBP-type PPIase family. Tig subfamily.

It localises to the cytoplasm. The enzyme catalyses [protein]-peptidylproline (omega=180) = [protein]-peptidylproline (omega=0). Its function is as follows. Involved in protein export. Acts as a chaperone by maintaining the newly synthesized protein in an open conformation. Functions as a peptidyl-prolyl cis-trans isomerase. The sequence is that of Trigger factor from Rickettsia massiliae (strain Mtu5).